Here is a 187-residue protein sequence, read N- to C-terminus: Large ribosomal subunit protein uL18 (187 aa).

Belongs to the universal ribosomal protein uL18 family. In terms of assembly, part of the 50S ribosomal subunit. Interacts with proteins L5 and L21e, and attaches the 5S rRNA to the 23S rRNA. Has been cross-linked to L21e.

In terms of biological role, this is one of 5 proteins that mediate the attachment of the 5S rRNA onto the large ribosomal subunit, where it forms part of the central protuberance and stabilizes the orientation of adjacent RNA domains. The chain is Large ribosomal subunit protein uL18 (rpl18) from Haloarcula marismortui (strain ATCC 43049 / DSM 3752 / JCM 8966 / VKM B-1809) (Halobacterium marismortui).